Here is a 101-residue protein sequence, read N- to C-terminus: uncharacterized protein (101 aa).

A run of 2 helical transmembrane segments spans residues 35 to 55 (LWTM…LIII) and 66 to 86 (FLFF…TLLF).

Its subcellular location is the membrane. This is an uncharacterized protein from Saccharomyces cerevisiae (strain ATCC 204508 / S288c) (Baker's yeast).